The chain runs to 238 residues: CBS domain-containing protein CBSX2, chloroplastic (238 aa).

A chloroplast-targeting transit peptide spans 1–71 (MGSISLSNSM…ASVNNNNSVP (71 aa)). CBS domains are found at residues 83-145 (MTPR…QNDT) and 177-234 (MTPS…KRET).

Its subcellular location is the plastid. It localises to the chloroplast stroma. The polypeptide is CBS domain-containing protein CBSX2, chloroplastic (CBSX2) (Arabidopsis thaliana (Mouse-ear cress)).